Consider the following 269-residue polypeptide: Hydroxyethylthiazole kinase (269 aa).

M46 serves as a coordination point for substrate. ATP is bound by residues R121 and T166. Residue G193 participates in substrate binding.

Belongs to the Thz kinase family. Mg(2+) is required as a cofactor.

The catalysed reaction is 5-(2-hydroxyethyl)-4-methylthiazole + ATP = 4-methyl-5-(2-phosphooxyethyl)-thiazole + ADP + H(+). It participates in cofactor biosynthesis; thiamine diphosphate biosynthesis; 4-methyl-5-(2-phosphoethyl)-thiazole from 5-(2-hydroxyethyl)-4-methylthiazole: step 1/1. Its function is as follows. Catalyzes the phosphorylation of the hydroxyl group of 4-methyl-5-beta-hydroxyethylthiazole (THZ). This Limosilactobacillus reuteri (strain DSM 20016) (Lactobacillus reuteri) protein is Hydroxyethylthiazole kinase.